Reading from the N-terminus, the 276-residue chain is Anthranilate synthase beta subunit 1, chloroplastic (276 aa).

Residues 1–50 constitute a chloroplast transit peptide; the sequence is MAASTLYKSCLLQPKSGSTTRRLNPSLVNPLTNPTRVSVLGKSRRDVFAK. Residues 74-273 enclose the Glutamine amidotransferase type-1 domain; that stretch reads PIIVIDNYDS…IKIVEKKESE (200 aa). Cys-152 functions as the Nucleophile in the catalytic mechanism. Residues His-247 and Glu-249 contribute to the active site.

In terms of assembly, heterotetramer consisting of two non-identical subunits: a beta subunit and a large alpha subunit. In terms of tissue distribution, expressed in the central cylinder of mature primary root zones, including pericycle and early lateral root primordia, and vasculature of cotyledons.

Its subcellular location is the plastid. It localises to the chloroplast. It catalyses the reaction chorismate + L-glutamine = anthranilate + pyruvate + L-glutamate + H(+). Its pathway is amino-acid biosynthesis; L-tryptophan biosynthesis; L-tryptophan from chorismate: step 1/5. Its function is as follows. Part of a heterotetrameric complex that catalyzes the two-step biosynthesis of anthranilate, an intermediate in the biosynthesis of L-tryptophan. In the first step, the glutamine-binding beta subunit of anthranilate synthase (AS) provides the glutamine amidotransferase activity which generates ammonia as a substrate that, along with chorismate, is used in the second step, catalyzed by the large alpha subunit of AS to produce anthranilate. Plays an important regulatory role in auxin production via the tryptophan-dependent biosynthetic pathway. The sequence is that of Anthranilate synthase beta subunit 1, chloroplastic (ASB1) from Arabidopsis thaliana (Mouse-ear cress).